We begin with the raw amino-acid sequence, 473 residues long: MSPRSGLLIVLGFTLWRVVMLNFDATDFFVDEAQYWFWSQNLDLGYYSKPPMIAWVIRAMTELSGSNAIYWIRLLGPLIHMAAALVLMKTAKRFVGPEIEGWTGATYITLPGVALSSVFFSTDVILLFFIAIALLAYFGLTQRRSVGLALVMGLGVGLAFLTKYAVLFVVPGGAIALLLIPAARIAVRDVIIAVAVAAVVALPNLWWNLQHDNTTVRHTQDIAHWSELGINLRRGLEFFAAQFGVVGPIIFFAMLWAVYRMIRGRSDDREKMLVWLSMPVVLLITLQATVAKAYANWAVTAYVAGTILAVWLLYLKWPKGLRLSLTINGIASLLFPLATIFPHQLLLPNGDALMKRYLGRAEVSREAAALATQAGTDIIVTDNRDMVADLFYTLRDASYRIYARAPAGLPESYYEQEFALPADITGKVLFLTDGAFTCATETPEVLKNWQPTEGNYKGKTLSIYKVSATCLAP.

10 helical membrane-spanning segments follow: residues 6–26 (GLLI…FDAT), 68–88 (AIYW…LVLM), 94–114 (FVGP…PGVA), 118–138 (VFFS…LAYF), 160–180 (FLTK…LLLI), 190–210 (VIIA…WNLQ), 238–258 (FFAA…LWAV), 271–291 (KMLV…ATVA), 295–315 (ANWA…LLYL), and 327–347 (INGI…QLLL).

It localises to the cell membrane. The protein operates within bacterial outer membrane biogenesis; LPS lipid A biosynthesis. In terms of biological role, involved in the modification of the lipopolysaccharide (LPS) lipid A moiety. Catalyzes the transfer of a galacturonic acid (GalA) residue to the 4'-position of 4'-dephosphorylated lipid A, using dodecaprenyl phosphate-GalA as the donor substrate. Acts before the other GalA transferases RgtA, RgtB and RgtC. The protein is Lipid A galacturonosyltransferase RgtD of Rhizobium johnstonii (strain DSM 114642 / LMG 32736 / 3841) (Rhizobium leguminosarum bv. viciae).